The primary structure comprises 126 residues: Large ribosomal subunit protein uL29 (126 aa).

The protein belongs to the universal ribosomal protein uL29 family.

The sequence is that of Large ribosomal subunit protein uL29 (rpl35) from Dictyostelium discoideum (Social amoeba).